The chain runs to 256 residues: Putative ankyrin repeat protein FPV231 (256 aa).

ANK repeat units lie at residues Met1 to Ser20, Glu24 to Ile53, Tyr57 to Leu86, His90 to Ile119, and Glu123 to Ile151.

In Vertebrata (FPV), this protein is Putative ankyrin repeat protein FPV231.